Consider the following 189-residue polypeptide: MASSAAEGKLTVITGPSGVGKGSLVKQLLELHPEIWLSISATTREARQGEIEGDHYFFLNRDRFAELVQAGGCLEWAEFAGNRYGTPRQPVEQQLSLGRPVLLEIELEGARQVRRSFPEAFQIFLAPPSFEELERRIRGRATDPEEAIQRRLARAREELMAQQEFDAVVINDNLQVAVIELESLMGLSC.

Residues 8–186 (GKLTVITGPS…AVIELESLMG (179 aa)) enclose the Guanylate kinase-like domain. 15–22 (GPSGVGKG) serves as a coordination point for ATP.

Belongs to the guanylate kinase family.

The protein localises to the cytoplasm. It carries out the reaction GMP + ATP = GDP + ADP. In terms of biological role, essential for recycling GMP and indirectly, cGMP. The chain is Guanylate kinase from Prochlorococcus marinus (strain MIT 9313).